Reading from the N-terminus, the 539-residue chain is Propionyl-CoA carboxylase beta chain, mitochondrial (539 aa).

The transit peptide at 1-28 (MAAAVRVTAARARLRVVVRSLHAGVRSL) directs the protein to the mitochondrion. A CoA carboxyltransferase N-terminal domain is found at 32 to 290 (PVSVNERIEN…SNQDPAPIRE (259 aa)). The segment at 32-533 (PVSVNERIEN…SKKVQRPWRK (502 aa)) is carboxyltransferase. S71 bears the Phosphoserine mark. K99 carries the post-translational modification N6-acetyllysine; alternate. N6-succinyllysine; alternate is present on K99. Residues 294–533 (PSDRLVPELD…SKKVQRPWRK (240 aa)) enclose the CoA carboxyltransferase C-terminal domain. Residues 325–358 (DERDFFEIMPNYAKNIIVGFARMNGRTVGIVGNQ) form an acyl-CoA binding region. N6-acetyllysine; alternate occurs at positions 474 and 489. An N6-succinyllysine; alternate mark is found at K474 and K489.

The protein belongs to the AccD/PCCB family. The holoenzyme is a dodecamer composed of 6 PCCA/alpha subunits and 6 PCCB/beta subunits.

It localises to the mitochondrion matrix. It carries out the reaction propanoyl-CoA + hydrogencarbonate + ATP = (S)-methylmalonyl-CoA + ADP + phosphate + H(+). It catalyses the reaction butanoyl-CoA + hydrogencarbonate + ATP = (2S)-ethylmalonyl-CoA + ADP + phosphate + H(+). Its pathway is metabolic intermediate metabolism; propanoyl-CoA degradation; succinyl-CoA from propanoyl-CoA: step 1/3. Its function is as follows. This is one of the 2 subunits of the biotin-dependent propionyl-CoA carboxylase (PCC), a mitochondrial enzyme involved in the catabolism of odd chain fatty acids, branched-chain amino acids isoleucine, threonine, methionine, and valine and other metabolites. Propionyl-CoA carboxylase catalyzes the carboxylation of propionyl-CoA/propanoyl-CoA to D-methylmalonyl-CoA/(S)-methylmalonyl-CoA. Within the holoenzyme, the alpha subunit catalyzes the ATP-dependent carboxylation of the biotin carried by the biotin carboxyl carrier (BCC) domain, while the beta subunit then transfers the carboxyl group from carboxylated biotin to propionyl-CoA. Propionyl-CoA carboxylase also significantly acts on butyryl-CoA/butanoyl-CoA, which is converted to ethylmalonyl-CoA/(2S)-ethylmalonyl-CoA at a much lower rate. Other alternative minor substrates include (2E)-butenoyl-CoA/crotonoyl-CoA. The chain is Propionyl-CoA carboxylase beta chain, mitochondrial from Sus scrofa (Pig).